Here is a 228-residue protein sequence, read N- to C-terminus: UPF0758 protein SH1266 (228 aa).

An MPN domain is found at lysine 102–phenylalanine 224. Residues histidine 173, histidine 175, and aspartate 186 each coordinate Zn(2+). Residues histidine 173–aspartate 186 carry the JAMM motif motif.

Belongs to the UPF0758 family.

The sequence is that of UPF0758 protein SH1266 from Staphylococcus haemolyticus (strain JCSC1435).